The following is a 101-amino-acid chain: Apolipoprotein C-II (101 aa).

An N-terminal signal peptide occupies residues 1–22 (MGTRYFLVGFLILLVLGFEVQG). The segment at 66–74 (AVDEKIRDI) is lipid binding. The lipoprotein lipase cofactor stretch occupies residues 78–101 (STAAVTTYAGIITDQVFSVLSGKD).

It belongs to the apolipoprotein C2 family. Proapolipoprotein C-II is synthesized as a sialic acid containing glycoprotein which is subsequently desialylated prior to its proteolytic processing. In terms of processing, proapolipoprotein C-II undergoes proteolytic cleavage of its N-terminal hexapeptide to generate apolipoprotein C-II. In bovine, proapolipoprotein C-II was found to be the minor form whereas apolipoprotein C-II was found to be the major form in plasma.

The protein localises to the secreted. In terms of biological role, component of chylomicrons, very low-density lipoproteins (VLDL), low-density lipoproteins (LDL), and high-density lipoproteins (HDL) in plasma. Plays an important role in lipoprotein metabolism as an activator of lipoprotein lipase. Both proapolipoprotein C-II and apolipoprotein C-II can activate lipoprotein lipase. This Bos taurus (Bovine) protein is Apolipoprotein C-II (APOC2).